Reading from the N-terminus, the 240-residue chain is Uridylate kinase (240 aa).

15 to 18 (KLSG) is a binding site for ATP. Residues 23–28 (GSEGFG) form an involved in allosteric activation by GTP region. UMP is bound at residue Gly57. 2 residues coordinate ATP: Gly58 and Arg62. Residues Asp77 and 138–145 (TGNPFFTT) contribute to the UMP site. 3 residues coordinate ATP: Thr165, Tyr171, and Asp174.

Belongs to the UMP kinase family. Homohexamer.

It localises to the cytoplasm. The enzyme catalyses UMP + ATP = UDP + ADP. The protein operates within pyrimidine metabolism; CTP biosynthesis via de novo pathway; UDP from UMP (UMPK route): step 1/1. Allosterically activated by GTP. Inhibited by UTP. Functionally, catalyzes the reversible phosphorylation of UMP to UDP. This Photobacterium profundum (strain SS9) protein is Uridylate kinase.